The sequence spans 310 residues: p-hydroxybenzoic acid efflux pump subunit AaeA (310 aa).

A helical transmembrane segment spans residues 12 to 32 (AITVVLVILAFIAIFNAWVYY).

The protein belongs to the membrane fusion protein (MFP) (TC 8.A.1) family.

It localises to the cell inner membrane. In terms of biological role, forms an efflux pump with AaeB. The sequence is that of p-hydroxybenzoic acid efflux pump subunit AaeA from Escherichia coli O7:K1 (strain IAI39 / ExPEC).